The sequence spans 143 residues: Ribonuclease H (143 aa).

An RNase H type-1 domain is found at methionine 1 to glutamine 136. Mg(2+) is bound by residues aspartate 9, glutamate 47, aspartate 69, and aspartate 128.

It belongs to the RNase H family. As to quaternary structure, monomer. Mg(2+) serves as cofactor.

It localises to the cytoplasm. It catalyses the reaction Endonucleolytic cleavage to 5'-phosphomonoester.. In terms of biological role, endonuclease that specifically degrades the RNA of RNA-DNA hybrids. This is Ribonuclease H from Helicobacter acinonychis (strain Sheeba).